The following is an 81-amino-acid chain: Beta-catenin-interacting protein 1 (81 aa).

Ser-59 is modified (phosphoserine).

It belongs to the CTNNBIP1 family. In terms of assembly, binds CTNNB1.

Its subcellular location is the cytoplasm. The protein resides in the nucleus. Functionally, prevents the interaction between CTNNB1 and TCF family members, and acts as a negative regulator of the Wnt signaling pathway. In Homo sapiens (Human), this protein is Beta-catenin-interacting protein 1 (CTNNBIP1).